The chain runs to 182 residues: MTLKALAQSLGITLKYLFSKPVTVPYPDAPVALKPRFHGRHVLTRHPNGLEKCIGCSLCAAACPAYAIYVEPAENDPENPVSAGERYAKVYEINMLRCIFCGLCEEACPTGAIVLGYDFEMADYEYSDLVYGKEDMLVDVVGTKPQRREAKRTGKPVKVGYVVPYVRPELEGFKAPTEGGKR.

4Fe-4S ferredoxin-type domains follow at residues 43–73 (LTRHPNGLEKCIGCSLCAAACPAYAIYVEPA) and 89–118 (KVYEINMLRCIFCGLCEEACPTGAIVLGYD). Residues C53, C56, S57, C59, C63, C98, I99, C101, C104, and C108 each contribute to the [4Fe-4S] cluster site.

Belongs to the complex I 23 kDa subunit family. As to quaternary structure, NDH-1 is composed of 15 different subunits, Nqo1 to Nqo15. The complex has a L-shaped structure, with the hydrophobic arm (subunits Nqo7, Nqo8 and Nqo10 to Nqo14) embedded in the membrane and the hydrophilic peripheral arm (subunits Nqo1 to Nqo6, Nqo9 and Nqo15) protruding into the bacterial cytoplasm. The hydrophilic domain contains all the redox centers. [4Fe-4S] cluster serves as cofactor.

Its subcellular location is the cell membrane. It catalyses the reaction a quinone + NADH + 5 H(+)(in) = a quinol + NAD(+) + 4 H(+)(out). In terms of biological role, NDH-1 shuttles electrons from NADH, via FMN and iron-sulfur (Fe-S) centers, to quinones in the respiratory chain. The immediate electron acceptor for the enzyme in this species is menaquinone. Couples the redox reaction to proton translocation (for every two electrons transferred, four hydrogen ions are translocated across the cytoplasmic membrane), and thus conserves the redox energy in a proton gradient required for the synthesis of ATP. The role of the Nqo9 subunit appears to provide a 'connecting chain' of two clusters between cluster N5 and the terminal cluster N2, and to stabilize the structure of the complex by interacting with other subunits. This Thermus thermophilus (strain ATCC 27634 / DSM 579 / HB8) protein is NADH-quinone oxidoreductase subunit 9 (nqo9).